The chain runs to 553 residues: CTP synthase (553 aa).

An amidoligase domain region spans residues 1 to 277 (MPTEPETDYD…DQYVMEELDI (277 aa)). Residue Ser26 participates in CTP binding. Residue Ser26 coordinates UTP. Residues 27-32 (GLGKGI) and Asp84 contribute to the ATP site. Positions 84 and 152 each coordinate Mg(2+). CTP is bound by residues 159–161 (DIE), 198–203 (KTKPTQ), and Lys234. UTP contacts are provided by residues 198-203 (KTKPTQ) and Lys234. A Glutamine amidotransferase type-1 domain is found at 307-544 (LVGKYDLEDA…LEAVLGDDPH (238 aa)). Gly364 is a binding site for L-glutamine. Cys391 serves as the catalytic Nucleophile; for glutamine hydrolysis. Residues 392 to 395 (LGFQ), Glu415, and Arg472 each bind L-glutamine. Residues His517 and Glu519 contribute to the active site.

It belongs to the CTP synthase family. In terms of assembly, homotetramer.

It carries out the reaction UTP + L-glutamine + ATP + H2O = CTP + L-glutamate + ADP + phosphate + 2 H(+). It catalyses the reaction L-glutamine + H2O = L-glutamate + NH4(+). The enzyme catalyses UTP + NH4(+) + ATP = CTP + ADP + phosphate + 2 H(+). It participates in pyrimidine metabolism; CTP biosynthesis via de novo pathway; CTP from UDP: step 2/2. Its activity is regulated as follows. Allosterically activated by GTP, when glutamine is the substrate; GTP has no effect on the reaction when ammonia is the substrate. The allosteric effector GTP functions by stabilizing the protein conformation that binds the tetrahedral intermediate(s) formed during glutamine hydrolysis. Inhibited by the product CTP, via allosteric rather than competitive inhibition. Functionally, catalyzes the ATP-dependent amination of UTP to CTP with either L-glutamine or ammonia as the source of nitrogen. Regulates intracellular CTP levels through interactions with the four ribonucleotide triphosphates. In Haloarcula marismortui (strain ATCC 43049 / DSM 3752 / JCM 8966 / VKM B-1809) (Halobacterium marismortui), this protein is CTP synthase.